The primary structure comprises 203 residues: MECPKEIVLLMHSYFDGDLQPEGEQQLKEHLRSCAACAAHFHELKKTVAFLQYAAHVAAPPSFAAKVMEAMPKERKTARLRRFLHRHPLLTAASLFLALTLGSLASSWGERGAFSVSADEHVIIRDHTVIVPKGETVKGDIVVRNGSIRIEGTVDGDVTVIHGKKYMASAGQVTGEVEEINQVFEWIWYNIKERFNRALQSIE.

The Cytoplasmic segment spans residues 1-86 (MECPKEIVLL…TARLRRFLHR (86 aa)). Residues His-30, Cys-34, and Cys-37 each coordinate Zn(2+). A helical transmembrane segment spans residues 87 to 103 (HPLLTAASLFLALTLGS). Over 104 to 203 (LASSWGERGA…RFNRALQSIE (100 aa)) the chain is Extracellular.

It belongs to the zinc-associated anti-sigma factor (ZAS) superfamily. Anti-sigma-W factor family. Requires Zn(2+) as cofactor. Post-translationally, is processed by three successive proteolytic events. First, the extracellular region of RsiW is cleaved by PrsW (Site-1 cleavage) in response to cell envelope stresses. Next, it undergoes cleavage at an intramembrane site (Site-2 cleavage) mediated by RasP. This cleavage uncovers a cryptic proteolytic tag with conserved alanine residues in the transmembrane segment, that is recognized mainly by the ClpXP protease, which completely degrades the protein in the cytoplasm and leads to the induction of the sigma-W-controlled genes.

The protein localises to the membrane. Is the anti-sigma factor for SigW. The presence of RsiW leads to the inactivation of SigW, and its proteolytic destruction to sigma-W activation. This chain is Anti-sigma-W factor RsiW (rsiW), found in Geobacillus kaustophilus (strain HTA426).